The chain runs to 155 residues: Peptide methionine sulfoxide reductase MsrB (155 aa).

The MsrB domain occupies 15-137 (REALIATLNA…NSVSLTFIPT (123 aa)). 4 residues coordinate Zn(2+): Cys-54, Cys-57, Cys-103, and Cys-106. Cys-126 acts as the Nucleophile in catalysis.

The protein belongs to the MsrB Met sulfoxide reductase family. Requires Zn(2+) as cofactor.

The catalysed reaction is L-methionyl-[protein] + [thioredoxin]-disulfide + H2O = L-methionyl-(R)-S-oxide-[protein] + [thioredoxin]-dithiol. The protein is Peptide methionine sulfoxide reductase MsrB of Xylella fastidiosa (strain M23).